A 305-amino-acid polypeptide reads, in one-letter code: uncharacterized protein (305 aa).

The first 29 residues, 1–29, serve as a signal peptide directing secretion; it reads MKKWFSSISKKKVSFSTLLLLGSGIVLSS. C30 carries N-palmitoyl cysteine lipidation. The S-diacylglycerol cysteine moiety is linked to residue C30. The segment at 234 to 265 is disordered; sequence FYNPDNSNGSNAPGSNQPNQDSGNNGSTTPAA. Residues 237-258 are compositionally biased toward polar residues; sequence PDNSNGSNAPGSNQPNQDSGNN.

It is found in the cell membrane. This is an uncharacterized protein from Mycoplasma pneumoniae (strain ATCC 29342 / M129 / Subtype 1) (Mycoplasmoides pneumoniae).